Consider the following 528-residue polypeptide: Glycerol kinase 5 (528 aa).

ATP contacts are provided by S28 and S29. Glycerol contacts are provided by R98, D275, and Q276. T297, G340, and G440 together coordinate ATP.

The protein belongs to the FGGY kinase family.

It is found in the cytoplasm. It catalyses the reaction glycerol + ATP = sn-glycerol 3-phosphate + ADP + H(+). The protein operates within polyol metabolism; glycerol degradation via glycerol kinase pathway; sn-glycerol 3-phosphate from glycerol: step 1/1. Functionally, skin-specific kinase that plays a key role in glycerol metabolism, catalyzing its phosphorylation to produce sn-glycerol 3-phosphate. Involved in skin-specific regulation of sterol regulatory element-binding protein (SREBP) processing and lipid biosynthesis. The chain is Glycerol kinase 5 (GK5) from Bos taurus (Bovine).